The following is a 186-amino-acid chain: Large ribosomal subunit protein uL22 (186 aa).

The disordered stretch occupies residues 160–186 (AAENEPAKKKLSKKKLQRQKEKMMRNE). Over residues 177–186 (RQKEKMMRNE) the composition is skewed to basic and acidic residues.

Belongs to the universal ribosomal protein uL22 family.

The chain is Large ribosomal subunit protein uL22 (RpL17) from Aedes aegypti (Yellowfever mosquito).